We begin with the raw amino-acid sequence, 433 residues long: Glutamate-rich protein 2 (433 aa).

5 disordered regions span residues 56–86, 113–161, 189–273, 308–344, and 394–433; these read VPAA…LAPP, DSAS…KHPQ, SRQN…SIET, CLED…TRAP, and EKAQ…EDGS. A compositionally biased stretch (pro residues) spans 63–85; the sequence is PAPPPPRALRPAPGPPRSAPLAP. Polar residues predominate over residues 114-127; that stretch reads SASQARGSEPSSSA. Composition is skewed to basic and acidic residues over residues 199–214 and 244–258; these read DPKE…EKPQ and ARKE…DKVS. The segment covering 259-273 has biased composition (polar residues); sequence LKSSENRPSSRSIET. 2 stretches are compositionally biased toward acidic residues: residues 308-334 and 397-433; these read CLED…EDDE and QEEE…EDGS.

The protein is Glutamate-rich protein 2 (Erich2) of Rattus norvegicus (Rat).